We begin with the raw amino-acid sequence, 120 residues long: MSFEVPSPYVWDDSFRVAYDNLDSEHQALFKCIAKCAENRADAAALADLVKVTVDHFADEERMMAKTNFSGLPEHNKIHSEFVAKIKSLSAPLDDATVAFAKQWLVNHIKGIDFKYKGNL.

Fe cation contacts are provided by His26, His56, Glu60, His75, His79, His108, and Asp113.

Belongs to the hemerythrin family.

In terms of biological role, myohemerythrin is an oxygen-binding protein found in the retractor muscles of certain worms. The oxygen-binding site contains two iron atoms. In Riftia pachyptila (Vent tube worm), this protein is Myohemerythrin.